The following is a 380-amino-acid chain: Kappa-type opioid receptor (380 aa).

The Extracellular portion of the chain corresponds to 1 to 57 (MEPPVQIFRGEPGPTCSPSTCLPPNGSGWFPGWAEPDGNGSAGSEDVLLEPAHISPV). N25 and N39 each carry an N-linked (GlcNAc...) asparagine glycan. The chain crosses the membrane as a helical span at residues 58-85 (ILVIITAVYSVVFVVGLVGNSLVMFVII). Residues 86 to 95 (RYTKMKTATN) lie on the Cytoplasmic side of the membrane. A helical membrane pass occupies residues 96–119 (IYIFNLALADALVTTTMPFQSTVY). The Extracellular portion of the chain corresponds to 120–132 (LMNSWPFGDVLCK). C131 and C210 are disulfide-bonded. A helical transmembrane segment spans residues 133-154 (VVISIDYYNMFTSIFTLTMMSV). Over 155–173 (DRYIAVCHPVKALDFRTPL) the chain is Cytoplasmic. The chain crosses the membrane as a helical span at residues 174 to 196 (KAKIINICIWILSSSVGISAIVL). Residues 197–222 (GGTKVREDMEVIECSLQFPDDDYSWW) are Extracellular-facing. The helical transmembrane segment at 223 to 247 (DLFMKVCVFVFAFVIPVLIIIVCYT) threads the bilayer. The Cytoplasmic segment spans residues 248–274 (LMILRLKSVRLLSGSREKDRNLRRITR). A helical transmembrane segment spans residues 275–296 (LVLVVVAVFVVCWTPIHIFILV). At 297–311 (EALGSTAHSTAALSS) the chain is on the extracellular side. The chain crosses the membrane as a helical span at residues 312–333 (YYFCIALGYTNSSLNPILYAFL). The Cytoplasmic portion of the chain corresponds to 334 to 380 (DENFKRCFRDFCFPIKMRMERQSTSRVRNTVQDPAYVREVDGVNKPV). A lipid anchor (S-palmitoyl cysteine) is attached at C345.

Belongs to the G-protein coupled receptor 1 family. As to quaternary structure, interacts with NHERF1. Interacts with GABARAPL1.

The protein resides in the cell membrane. Its function is as follows. G-protein coupled opioid receptor that functions as a receptor for endogenous alpha-neoendorphins and dynorphins, but has low affinity for beta-endorphins. Also functions as a receptor for various synthetic opioids and for the psychoactive diterpene salvinorin A. Ligand binding causes a conformation change that triggers signaling via guanine nucleotide-binding proteins (G proteins) and modulates the activity of down-stream effectors, such as adenylate cyclase. Signaling leads to the inhibition of adenylate cyclase activity. Inhibits neurotransmitter release by reducing calcium ion currents and increasing potassium ion conductance. Plays a role in the perception of pain. Plays a role in mediating reduced physical activity upon treatment with synthetic opioids. Plays a role in the regulation of salivation in response to synthetic opioids. May play a role in arousal and regulation of autonomic and neuroendocrine functions. This chain is Kappa-type opioid receptor (OPRK1), found in Bos taurus (Bovine).